Consider the following 204-residue polypeptide: Peptidyl-tRNA hydrolase (204 aa).

Y19 provides a ligand contact to tRNA. The active-site Proton acceptor is H24. TRNA contacts are provided by Y70, N72, and N118.

This sequence belongs to the PTH family. Monomer.

The protein localises to the cytoplasm. It catalyses the reaction an N-acyl-L-alpha-aminoacyl-tRNA + H2O = an N-acyl-L-amino acid + a tRNA + H(+). Its function is as follows. Hydrolyzes ribosome-free peptidyl-tRNAs (with 1 or more amino acids incorporated), which drop off the ribosome during protein synthesis, or as a result of ribosome stalling. In terms of biological role, catalyzes the release of premature peptidyl moieties from peptidyl-tRNA molecules trapped in stalled 50S ribosomal subunits, and thus maintains levels of free tRNAs and 50S ribosomes. This is Peptidyl-tRNA hydrolase from Prochlorococcus marinus (strain SARG / CCMP1375 / SS120).